A 318-amino-acid polypeptide reads, in one-letter code: UDP-3-O-acylglucosamine N-acyltransferase 1 (318 aa).

The active-site Proton acceptor is His-230.

Belongs to the transferase hexapeptide repeat family. LpxD subfamily. As to quaternary structure, homotrimer.

It carries out the reaction a UDP-3-O-[(3R)-3-hydroxyacyl]-alpha-D-glucosamine + a (3R)-hydroxyacyl-[ACP] = a UDP-2-N,3-O-bis[(3R)-3-hydroxyacyl]-alpha-D-glucosamine + holo-[ACP] + H(+). It participates in bacterial outer membrane biogenesis; LPS lipid A biosynthesis. Functionally, catalyzes the N-acylation of UDP-3-O-acylglucosamine using 3-hydroxyacyl-ACP as the acyl donor. Is involved in the biosynthesis of lipid A, a phosphorylated glycolipid that anchors the lipopolysaccharide to the outer membrane of the cell. The protein is UDP-3-O-acylglucosamine N-acyltransferase 1 of Sulfurimonas denitrificans (strain ATCC 33889 / DSM 1251) (Thiomicrospira denitrificans (strain ATCC 33889 / DSM 1251)).